Consider the following 157-residue polypeptide: S-ribosylhomocysteine lyase 2 (157 aa).

Fe cation-binding residues include H54, H58, and C124.

It belongs to the LuxS family. In terms of assembly, homodimer. It depends on Fe cation as a cofactor.

The enzyme catalyses S-(5-deoxy-D-ribos-5-yl)-L-homocysteine = (S)-4,5-dihydroxypentane-2,3-dione + L-homocysteine. In terms of biological role, involved in the synthesis of autoinducer 2 (AI-2) which is secreted by bacteria and is used to communicate both the cell density and the metabolic potential of the environment. The regulation of gene expression in response to changes in cell density is called quorum sensing. Catalyzes the transformation of S-ribosylhomocysteine (RHC) to homocysteine (HC) and 4,5-dihydroxy-2,3-pentadione (DPD). This is S-ribosylhomocysteine lyase 2 from Lactobacillus delbrueckii subsp. bulgaricus (strain ATCC BAA-365 / Lb-18).